We begin with the raw amino-acid sequence, 469 residues long: Uronate isomerase (469 aa).

This sequence belongs to the metallo-dependent hydrolases superfamily. Uronate isomerase family.

It catalyses the reaction D-glucuronate = D-fructuronate. The catalysed reaction is aldehydo-D-galacturonate = keto-D-tagaturonate. Its pathway is carbohydrate metabolism; pentose and glucuronate interconversion. The polypeptide is Uronate isomerase (Yersinia pseudotuberculosis serotype O:1b (strain IP 31758)).